Here is a 495-residue protein sequence, read N- to C-terminus: Aspartyl/glutamyl-tRNA(Asn/Gln) amidotransferase subunit B (495 aa).

This sequence belongs to the GatB/GatE family. GatB subfamily. As to quaternary structure, heterotrimer of A, B and C subunits.

It carries out the reaction L-glutamyl-tRNA(Gln) + L-glutamine + ATP + H2O = L-glutaminyl-tRNA(Gln) + L-glutamate + ADP + phosphate + H(+). The enzyme catalyses L-aspartyl-tRNA(Asn) + L-glutamine + ATP + H2O = L-asparaginyl-tRNA(Asn) + L-glutamate + ADP + phosphate + 2 H(+). Allows the formation of correctly charged Asn-tRNA(Asn) or Gln-tRNA(Gln) through the transamidation of misacylated Asp-tRNA(Asn) or Glu-tRNA(Gln) in organisms which lack either or both of asparaginyl-tRNA or glutaminyl-tRNA synthetases. The reaction takes place in the presence of glutamine and ATP through an activated phospho-Asp-tRNA(Asn) or phospho-Glu-tRNA(Gln). This is Aspartyl/glutamyl-tRNA(Asn/Gln) amidotransferase subunit B from Gloeothece citriformis (strain PCC 7424) (Cyanothece sp. (strain PCC 7424)).